Here is a 104-residue protein sequence, read N- to C-terminus: Large ribosomal subunit protein uL24 (104 aa).

It belongs to the universal ribosomal protein uL24 family. In terms of assembly, part of the 50S ribosomal subunit.

One of two assembly initiator proteins, it binds directly to the 5'-end of the 23S rRNA, where it nucleates assembly of the 50S subunit. Functionally, one of the proteins that surrounds the polypeptide exit tunnel on the outside of the subunit. The chain is Large ribosomal subunit protein uL24 from Psychromonas ingrahamii (strain DSM 17664 / CCUG 51855 / 37).